Reading from the N-terminus, the 117-residue chain is G antigen 13 (117 aa).

Residues 1-117 are disordered; sequence MSWRGRSTYY…PEEGEKQSQC (117 aa). Acidic residues-rich tracts occupy residues 32–45 and 87–96; these read FSDEVEPATPEEGE and ECEDGPDGQE. Residues 103 to 117 are compositionally biased toward basic and acidic residues; it reads EEVKTPEEGEKQSQC.

Belongs to the GAGE family.

In Homo sapiens (Human), this protein is G antigen 13.